Consider the following 454-residue polypeptide: Bifunctional protein GlmU (454 aa).

Residues 1–226 (MSLEIVILAA…AMEVQGVNDR (226 aa)) are pyrophosphorylase. Residues 8–11 (LAAG), K22, Q73, 78–79 (GT), 99–101 (YGD), G136, E151, N166, and N224 contribute to the UDP-N-acetyl-alpha-D-glucosamine site. D101 provides a ligand contact to Mg(2+). N224 is a binding site for Mg(2+). Residues 227 to 247 (MQQAQLERHYQRLRAEELMRQ) are linker. The N-acetyltransferase stretch occupies residues 248–454 (GVTLLDPQRL…NWKRPEKIRK (207 aa)). Residues R330 and K348 each contribute to the UDP-N-acetyl-alpha-D-glucosamine site. Residue H360 is the Proton acceptor of the active site. Residues Y363 and N374 each coordinate UDP-N-acetyl-alpha-D-glucosamine. Residues A377, 383-384 (NY), S402, A420, and R437 each bind acetyl-CoA.

It in the N-terminal section; belongs to the N-acetylglucosamine-1-phosphate uridyltransferase family. This sequence in the C-terminal section; belongs to the transferase hexapeptide repeat family. In terms of assembly, homotrimer. Requires Mg(2+) as cofactor.

It is found in the cytoplasm. The enzyme catalyses alpha-D-glucosamine 1-phosphate + acetyl-CoA = N-acetyl-alpha-D-glucosamine 1-phosphate + CoA + H(+). It carries out the reaction N-acetyl-alpha-D-glucosamine 1-phosphate + UTP + H(+) = UDP-N-acetyl-alpha-D-glucosamine + diphosphate. Its pathway is nucleotide-sugar biosynthesis; UDP-N-acetyl-alpha-D-glucosamine biosynthesis; N-acetyl-alpha-D-glucosamine 1-phosphate from alpha-D-glucosamine 6-phosphate (route II): step 2/2. It functions in the pathway nucleotide-sugar biosynthesis; UDP-N-acetyl-alpha-D-glucosamine biosynthesis; UDP-N-acetyl-alpha-D-glucosamine from N-acetyl-alpha-D-glucosamine 1-phosphate: step 1/1. It participates in bacterial outer membrane biogenesis; LPS lipid A biosynthesis. Catalyzes the last two sequential reactions in the de novo biosynthetic pathway for UDP-N-acetylglucosamine (UDP-GlcNAc). The C-terminal domain catalyzes the transfer of acetyl group from acetyl coenzyme A to glucosamine-1-phosphate (GlcN-1-P) to produce N-acetylglucosamine-1-phosphate (GlcNAc-1-P), which is converted into UDP-GlcNAc by the transfer of uridine 5-monophosphate (from uridine 5-triphosphate), a reaction catalyzed by the N-terminal domain. This is Bifunctional protein GlmU from Pseudomonas paraeruginosa (strain DSM 24068 / PA7) (Pseudomonas aeruginosa (strain PA7)).